Reading from the N-terminus, the 478-residue chain is Glutamate--tRNA ligase (478 aa).

Positions 9–19 match the 'HIGH' region motif; that stretch reads PSPTGLLHIGT. A 'KMSKS' region motif is present at residues 248–252; it reads KLSKR. Residue Lys-251 coordinates ATP.

It belongs to the class-I aminoacyl-tRNA synthetase family. Glutamate--tRNA ligase type 1 subfamily. Monomer.

It is found in the cytoplasm. The enzyme catalyses tRNA(Glu) + L-glutamate + ATP = L-glutamyl-tRNA(Glu) + AMP + diphosphate. In terms of biological role, catalyzes the attachment of glutamate to tRNA(Glu) in a two-step reaction: glutamate is first activated by ATP to form Glu-AMP and then transferred to the acceptor end of tRNA(Glu). This Prochlorococcus marinus (strain MIT 9515) protein is Glutamate--tRNA ligase.